The primary structure comprises 542 residues: POTE ankyrin domain family member C (542 aa).

7 ANK repeats span residues 138 to 171 (EDLD…KRDK), 172 to 201 (QKRT…QLNV), 205 to 234 (KKRT…DQNI), 238 to 267 (YGNT…DIES), 271 to 300 (CGLT…NLNA), 304 to 333 (YGRT…DVSS), and 337 to 373 (SGQT…SENS). The disordered stretch occupies residues 369–494 (SSENSNPEQD…NTGISQDEIL (126 aa)). 3 stretches are compositionally biased toward basic and acidic residues: residues 377-392 (QDLK…RLKV), 401-412 (MSQEPEINKDCD), and 466-481 (EEYH…KQLS). A compositionally biased stretch (polar residues) spans 482–494 (EEQNTGISQDEIL). Residues 489–538 (SQDEILTNKQKQIEVAEKKMNSELSLSHKKEEDLLRENSMLQEEIAMLIS) are a coiled coil.

It belongs to the POTE family. In terms of tissue distribution, expressed in prostate and testis.

The sequence is that of POTE ankyrin domain family member C (POTEC) from Homo sapiens (Human).